We begin with the raw amino-acid sequence, 248 residues long: L-seryl-tRNA(Sec) kinase (248 aa).

7 to 14 (GLPGVGKS) lines the ATP pocket.

The protein belongs to the L-seryl-tRNA(Sec) kinase family.

It carries out the reaction L-seryl-tRNA(Sec) + ATP = O-phospho-L-seryl-tRNA(Sec) + ADP. It participates in aminoacyl-tRNA biosynthesis; selenocysteinyl-tRNA(Sec) biosynthesis; selenocysteinyl-tRNA(Sec) from L-seryl-tRNA(Sec) (archaeal/eukaryal route): step 1/2. In terms of biological role, specifically phosphorylates seryl-tRNA(Sec) to O-phosphoseryl-tRNA(Sec), an activated intermediate for selenocysteine biosynthesis. The sequence is that of L-seryl-tRNA(Sec) kinase (pstK) from Methanocaldococcus jannaschii (strain ATCC 43067 / DSM 2661 / JAL-1 / JCM 10045 / NBRC 100440) (Methanococcus jannaschii).